The chain runs to 520 residues: 2-isopropylmalate synthase (520 aa).

The Pyruvate carboxyltransferase domain occupies 12–274; the sequence is VIIFDTTLRD…WNKIDTTQLT (263 aa). Mn(2+) is bound by residues aspartate 21, histidine 209, histidine 211, and asparagine 245. The tract at residues 398-520 is regulatory domain; that stretch reads KLTSLTVIAG…RDTVTTAAAS (123 aa).

This sequence belongs to the alpha-IPM synthase/homocitrate synthase family. LeuA type 1 subfamily. In terms of assembly, homodimer. It depends on Mn(2+) as a cofactor.

Its subcellular location is the cytoplasm. The enzyme catalyses 3-methyl-2-oxobutanoate + acetyl-CoA + H2O = (2S)-2-isopropylmalate + CoA + H(+). It functions in the pathway amino-acid biosynthesis; L-leucine biosynthesis; L-leucine from 3-methyl-2-oxobutanoate: step 1/4. Its function is as follows. Catalyzes the condensation of the acetyl group of acetyl-CoA with 3-methyl-2-oxobutanoate (2-ketoisovalerate) to form 3-carboxy-3-hydroxy-4-methylpentanoate (2-isopropylmalate). The protein is 2-isopropylmalate synthase of Bradyrhizobium diazoefficiens (strain JCM 10833 / BCRC 13528 / IAM 13628 / NBRC 14792 / USDA 110).